We begin with the raw amino-acid sequence, 345 residues long: Uroporphyrinogen decarboxylase (345 aa).

Residues 28-32, Asp77, Tyr153, Ser208, and His322 contribute to the substrate site; that span reads RQAGR.

Belongs to the uroporphyrinogen decarboxylase family. As to quaternary structure, homodimer.

It is found in the cytoplasm. It carries out the reaction uroporphyrinogen III + 4 H(+) = coproporphyrinogen III + 4 CO2. The protein operates within porphyrin-containing compound metabolism; protoporphyrin-IX biosynthesis; coproporphyrinogen-III from 5-aminolevulinate: step 4/4. Functionally, catalyzes the decarboxylation of four acetate groups of uroporphyrinogen-III to yield coproporphyrinogen-III. The sequence is that of Uroporphyrinogen decarboxylase from Solibacter usitatus (strain Ellin6076).